Reading from the N-terminus, the 221-residue chain is Translation initiation factor 6 (221 aa).

It belongs to the eIF-6 family.

Binds to the 50S ribosomal subunit and prevents its association with the 30S ribosomal subunit to form the 70S initiation complex. This chain is Translation initiation factor 6, found in Methanosphaerula palustris (strain ATCC BAA-1556 / DSM 19958 / E1-9c).